The sequence spans 483 residues: Probable L-xylulose kinase (483 aa).

This sequence belongs to the FGGY kinase family. Homodimer.

The catalysed reaction is L-xylulose + ATP = L-xylulose 5-phosphate + ADP + H(+). In Pasteurella multocida (strain Pm70), this protein is Probable L-xylulose kinase (lyx).